We begin with the raw amino-acid sequence, 145 residues long: D-aminoacyl-tRNA deacylase (145 aa).

A Gly-cisPro motif, important for rejection of L-amino acids motif is present at residues 137–138 (GP).

This sequence belongs to the DTD family. As to quaternary structure, homodimer.

It localises to the cytoplasm. The catalysed reaction is glycyl-tRNA(Ala) + H2O = tRNA(Ala) + glycine + H(+). It catalyses the reaction a D-aminoacyl-tRNA + H2O = a tRNA + a D-alpha-amino acid + H(+). Functionally, an aminoacyl-tRNA editing enzyme that deacylates mischarged D-aminoacyl-tRNAs. Also deacylates mischarged glycyl-tRNA(Ala), protecting cells against glycine mischarging by AlaRS. Acts via tRNA-based rather than protein-based catalysis; rejects L-amino acids rather than detecting D-amino acids in the active site. By recycling D-aminoacyl-tRNA to D-amino acids and free tRNA molecules, this enzyme counteracts the toxicity associated with the formation of D-aminoacyl-tRNA entities in vivo and helps enforce protein L-homochirality. The sequence is that of D-aminoacyl-tRNA deacylase from Chromohalobacter salexigens (strain ATCC BAA-138 / DSM 3043 / CIP 106854 / NCIMB 13768 / 1H11).